The primary structure comprises 271 residues: MQYWGKIIGVAVALLMGGGFWGVVLGLLIGHMFDKARSRKMAWFANQRERQALFFATTFEVMGHLTKSKGRVTEADIHIASQLMDRMNLHGASRTAAQNAFRVGKSDNYPLREKMRQFRSVCFGRFDLIRMFLEIQIQAAFADGSLHPNERAVLYVIAEELGISRAQFDQFLRMMQGGAQFGGGYQQQSGGGNWQQAQRGPTLEDACNVLGVKPTDDATTIKRAYRKLMSEHHPDKLVAKGLPPEMMEMAKQKAQEIQQAYELIKQQKGFK.

The Periplasmic portion of the chain corresponds to 1 to 6 (MQYWGK). Residues 7 to 31 (IIGVAVALLMGGGFWGVVLGLLIGH) form a helical membrane-spanning segment. Residues 32–271 (MFDKARSRKM…ELIKQQKGFK (240 aa)) are Cytoplasmic-facing. The J domain occupies 205–271 (DACNVLGVKP…ELIKQQKGFK (67 aa)).

As to quaternary structure, homodimer.

It localises to the cell inner membrane. Regulatory DnaK co-chaperone. Direct interaction between DnaK and DjlA is needed for the induction of the wcaABCDE operon, involved in the synthesis of a colanic acid polysaccharide capsule, possibly through activation of the RcsB/RcsC phosphotransfer signaling pathway. The colanic acid capsule may help the bacterium survive conditions outside the host. This Escherichia coli O157:H7 protein is Co-chaperone protein DjlA.